Here is a 234-residue protein sequence, read N- to C-terminus: Peptidase E (234 aa).

Active-site charge relay system residues include S123, D138, and H160.

It belongs to the peptidase S51 family.

Its subcellular location is the cytoplasm. The catalysed reaction is Dipeptidase E catalyzes the hydrolysis of dipeptides Asp-|-Xaa. It does not act on peptides with N-terminal Glu, Asn or Gln, nor does it cleave isoaspartyl peptides.. In terms of biological role, hydrolyzes dipeptides containing N-terminal aspartate residues. May play a role in allowing the cell to use peptide aspartate to spare carbon otherwise required for the synthesis of the aspartate family of amino acids. The sequence is that of Peptidase E from Haemophilus influenzae (strain PittGG).